A 216-amino-acid chain; its full sequence is MIITIDGPSGTGKSTLAKALAQTLQFLYCNTGAMYRTLAYARLQPDWQEVPLEDFLASPPFSFSFSKDSPLQAFYGDHLLTSELSSQEVANFASLFSKEPLVRAYMQTLQKQYATVGNCVFEGRDMGSKVFPHAEVKIFLTAKPEIRAERRLKDLPQGSLSKEALMAELIARDQADQQRECDPLVIPQDATVIDSSDLTISQILEKILPLIPSHLT.

7–15 (GPSGTGKST) is a binding site for ATP.

Belongs to the cytidylate kinase family. Type 1 subfamily.

It localises to the cytoplasm. The enzyme catalyses CMP + ATP = CDP + ADP. It catalyses the reaction dCMP + ATP = dCDP + ADP. This Chlamydia trachomatis serovar A (strain ATCC VR-571B / DSM 19440 / HAR-13) protein is Cytidylate kinase.